The primary structure comprises 319 residues: MSGDTCLTAVCPASGAKPKTYSFKGGCLGNKYIRLNVGGCLYYTTVQVLTRHDTMLKAMFSGRMEVLTDKEGWILIDRCGKHFGSILNYLRDDTITLPKSRHEVKELMAEAKYYLIQGLVDKCQAALQDKNDTYEAVCNIPIITSPKEEEKLIESSAKPVVKLLYNRSNNKYSYTSNSDDNLLKNIELFDKLSLRFNGRVLFIKDVIGDEICCWSFYGQGRKLAEVCCTSIVYATEKKQTKVEFPEARIYEETLNVLLYETPRVPDNSLLEATSRTRSQASHSEDDEGFELRDRVRRIHVKRYSTYDDRQLGHQSAYRD.

Residues 31-99 form the BTB domain; that stretch reads KYIRLNVGGC…LRDDTITLPK (69 aa).

It belongs to the BACURD family. As to quaternary structure, component of the BCR(TNFAIP1) E3 ubiquitin ligase complex, at least composed of cul3, tnfaip1/bacurd2 and rbx1.

The protein localises to the cytoplasm. The protein resides in the nucleus. It is found in the endosome. The protein operates within protein modification; protein ubiquitination. Its function is as follows. Substrate-specific adapter of a BCR (BTB-CUL3-RBX1) E3 ubiquitin-protein ligase complex involved in regulation of cytoskeleton structure. The BCR(TNFAIP1) E3 ubiquitin ligase complex mediates the ubiquitination of target proteins, leading to their degradation by the proteasome. The polypeptide is BTB/POZ domain-containing adapter for CUL3-mediated RhoA degradation protein 2 (tnfaip1) (Xenopus tropicalis (Western clawed frog)).